Here is an 885-residue protein sequence, read N- to C-terminus: DNA mismatch repair protein MutS (885 aa).

640-647 (GPNMGGKS) is an ATP binding site.

It belongs to the DNA mismatch repair MutS family.

This protein is involved in the repair of mismatches in DNA. It is possible that it carries out the mismatch recognition step. This protein has a weak ATPase activity. The polypeptide is DNA mismatch repair protein MutS (Variovorax paradoxus (strain S110)).